The following is a 324-amino-acid chain: Putative S-adenosyl-L-methionine-dependent methyltransferase MMAR_1059 (324 aa).

S-adenosyl-L-methionine is bound by residues D138 and D167–L168.

The protein belongs to the UPF0677 family.

In terms of biological role, exhibits S-adenosyl-L-methionine-dependent methyltransferase activity. This is Putative S-adenosyl-L-methionine-dependent methyltransferase MMAR_1059 from Mycobacterium marinum (strain ATCC BAA-535 / M).